A 264-amino-acid polypeptide reads, in one-letter code: Thymidylate synthase (264 aa).

Residue arginine 21 participates in dUMP binding. Position 51 (histidine 51) interacts with (6R)-5,10-methylene-5,6,7,8-tetrahydrofolate. 126–127 (RR) contributes to the dUMP binding site. Cysteine 146 (nucleophile) is an active-site residue. Residues 166-169 (RSAD), asparagine 177, and 207-209 (HLY) each bind dUMP. (6R)-5,10-methylene-5,6,7,8-tetrahydrofolate is bound at residue aspartate 169. Alanine 263 contacts (6R)-5,10-methylene-5,6,7,8-tetrahydrofolate.

The protein belongs to the thymidylate synthase family. Bacterial-type ThyA subfamily. Homodimer.

The protein localises to the cytoplasm. The catalysed reaction is dUMP + (6R)-5,10-methylene-5,6,7,8-tetrahydrofolate = 7,8-dihydrofolate + dTMP. It participates in pyrimidine metabolism; dTTP biosynthesis. Functionally, catalyzes the reductive methylation of 2'-deoxyuridine-5'-monophosphate (dUMP) to 2'-deoxythymidine-5'-monophosphate (dTMP) while utilizing 5,10-methylenetetrahydrofolate (mTHF) as the methyl donor and reductant in the reaction, yielding dihydrofolate (DHF) as a by-product. This enzymatic reaction provides an intracellular de novo source of dTMP, an essential precursor for DNA biosynthesis. The sequence is that of Thymidylate synthase from Bartonella henselae (strain ATCC 49882 / DSM 28221 / CCUG 30454 / Houston 1) (Rochalimaea henselae).